Consider the following 271-residue polypeptide: uncharacterized protein (271 aa).

This is an uncharacterized protein from Escherichia coli (strain K12).